The sequence spans 594 residues: Amino-acid permease 1 (594 aa).

Helical transmembrane passes span 75-95 (QMIA…GKSL), 101-121 (GSLM…ILSL), 146-166 (IGFA…PSEI), 181-201 (LNPA…NAFG), 210-230 (FVSS…AIII), 297-317 (VFYR…LVVP), 323-343 (LGNV…VLPH), 344-364 (ITNA…VFAA), 390-410 (PVIS…NAAP), 416-436 (FDWL…LSFI), 468-488 (YGVL…IFPV), and 498-518 (FFVS…SPIF). The segment at 550–587 (TSELSEKDLTKPNLQSNDNKNSEDLESNTPPQKKSALQ) is disordered.

This sequence belongs to the amino acid-polyamine-organocation (APC) superfamily.

The protein localises to the membrane. This chain is Amino-acid permease 1 (aap1), found in Schizosaccharomyces pombe (strain 972 / ATCC 24843) (Fission yeast).